Here is a 616-residue protein sequence, read N- to C-terminus: Centrosomal protein of 70 kDa (616 aa).

2 coiled-coil regions span residues 96-210 and 273-335; these read EETT…EEER and NYKG…NIKL. The TPR repeat unit spans residues 502-535; the sequence is NGVFPRMNEVYTRLGEMNNAVRNLQELLELDSSS.

Directly interacts with tubulin-gamma; this interaction determines centrosomal localization.

The protein resides in the cytoplasm. The protein localises to the cytoskeleton. Its subcellular location is the microtubule organizing center. It localises to the centrosome. Plays a role in the organization of both preexisting and nascent microtubules in interphase cells. During mitosis, required for the organization and orientation of the mitotic spindle. This chain is Centrosomal protein of 70 kDa (Cep70), found in Mus musculus (Mouse).